The primary structure comprises 247 residues: Phycocyanobilin:ferredoxin oxidoreductase (247 aa).

Belongs to the HY2 family.

The catalysed reaction is (2R,3Z)-phycocyanobilin + 4 oxidized [2Fe-2S]-[ferredoxin] = biliverdin IXalpha + 4 reduced [2Fe-2S]-[ferredoxin] + 4 H(+). Its function is as follows. Catalyzes the four-electron reduction of biliverdin IX-alpha (2-electron reduction at both the A and D rings); the reaction proceeds via an isolatable 2-electron intermediate, 181,182-dihydrobiliverdin. This is Phycocyanobilin:ferredoxin oxidoreductase (pcyA) from Prochlorococcus marinus (strain SARG / CCMP1375 / SS120).